The following is a 37-amino-acid chain: Cytochrome b6-f complex subunit 5 (37 aa).

Residues Leu-5–Ala-25 form a helical membrane-spanning segment.

Belongs to the PetG family. As to quaternary structure, the 4 large subunits of the cytochrome b6-f complex are cytochrome b6, subunit IV (17 kDa polypeptide, PetD), cytochrome f and the Rieske protein, while the 4 small subunits are PetG, PetL, PetM and PetN. The complex functions as a dimer.

The protein resides in the plastid. It localises to the chloroplast thylakoid membrane. Its function is as follows. Component of the cytochrome b6-f complex, which mediates electron transfer between photosystem II (PSII) and photosystem I (PSI), cyclic electron flow around PSI, and state transitions. PetG is required for either the stability or assembly of the cytochrome b6-f complex. In Porphyra purpurea (Red seaweed), this protein is Cytochrome b6-f complex subunit 5.